The primary structure comprises 391 residues: Immediate-early protein 2 (391 aa).

It belongs to the herpesviridae US22 family.

It localises to the host cytoplasm. Its subcellular location is the host nucleus. Functionally, involved in the reactivation of latent MCMV in spleen cells. The protein is Immediate-early protein 2 (IE2) of Murid herpesvirus 1 (strain Smith) (MuHV-1).